We begin with the raw amino-acid sequence, 180 residues long: NADH-quinone oxidoreductase subunit I (180 aa).

2 4Fe-4S ferredoxin-type domains span residues 48 to 80 and 90 to 119; these read IVLTRDPDGQERCVACNLCAVACPVGCISLQKA and EFFRINFSRCIFCGMCEEACPTTAIQLTPD. [4Fe-4S] cluster-binding residues include Cys-60, Cys-63, Cys-66, Cys-70, Cys-99, Cys-102, Cys-105, and Cys-109.

The protein belongs to the complex I 23 kDa subunit family. As to quaternary structure, NDH-1 is composed of 13 different subunits. Subunits NuoA, H, J, K, L, M, N constitute the membrane sector of the complex. It depends on [4Fe-4S] cluster as a cofactor.

Its subcellular location is the cell inner membrane. The enzyme catalyses a quinone + NADH + 5 H(+)(in) = a quinol + NAD(+) + 4 H(+)(out). NDH-1 shuttles electrons from NADH, via FMN and iron-sulfur (Fe-S) centers, to quinones in the respiratory chain. The immediate electron acceptor for the enzyme in this species is believed to be ubiquinone. Couples the redox reaction to proton translocation (for every two electrons transferred, four hydrogen ions are translocated across the cytoplasmic membrane), and thus conserves the redox energy in a proton gradient. This chain is NADH-quinone oxidoreductase subunit I, found in Cronobacter sakazakii (strain ATCC BAA-894) (Enterobacter sakazakii).